Reading from the N-terminus, the 186-residue chain is Cell division protein SepF (186 aa).

2 disordered regions span residues 14–59 and 157–186; these read EHDE…NETS and GRSQESNETSSSVSSDNFPTWGYETSRLAQ. Residues 16-27 are compositionally biased toward acidic residues; sequence DEYEEDYDEEME. A compositionally biased stretch (low complexity) spans 159 to 171; the sequence is SQESNETSSSVSS.

The protein belongs to the SepF family. Homodimer. Interacts with FtsZ.

The protein localises to the cytoplasm. Functionally, cell division protein that is part of the divisome complex and is recruited early to the Z-ring. Probably stimulates Z-ring formation, perhaps through the cross-linking of FtsZ protofilaments. Its function overlaps with FtsA. The sequence is that of Cell division protein SepF from Synechocystis sp. (strain ATCC 27184 / PCC 6803 / Kazusa).